Consider the following 334-residue polypeptide: Biotin synthase (334 aa).

The Radical SAM core domain occupies 55 to 285; the sequence is GEGGGVHACS…AHPSKIIKFA (231 aa). [4Fe-4S] cluster contacts are provided by cysteine 73, cysteine 77, and cysteine 80. [2Fe-2S] cluster is bound by residues cysteine 152, cysteine 213, and lysine 283.

The protein belongs to the radical SAM superfamily. Biotin synthase family. As to quaternary structure, homodimer. It depends on [4Fe-4S] cluster as a cofactor. The cofactor is [2Fe-2S] cluster.

The enzyme catalyses (4R,5S)-dethiobiotin + (sulfur carrier)-SH + 2 reduced [2Fe-2S]-[ferredoxin] + 2 S-adenosyl-L-methionine = (sulfur carrier)-H + biotin + 2 5'-deoxyadenosine + 2 L-methionine + 2 oxidized [2Fe-2S]-[ferredoxin]. It functions in the pathway cofactor biosynthesis; biotin biosynthesis; biotin from 7,8-diaminononanoate: step 2/2. Catalyzes the conversion of dethiobiotin (DTB) to biotin by the insertion of a sulfur atom into dethiobiotin via a radical-based mechanism. This is Biotin synthase from Chlorobaculum parvum (strain DSM 263 / NCIMB 8327) (Chlorobium vibrioforme subsp. thiosulfatophilum).